We begin with the raw amino-acid sequence, 180 residues long: MKMLLLLCLGLTLVCVHAEEASSTGRNFNVEKINGEWHTIILASDKREKIEDNGNFRLFLEQIHVLENSLVLKFHTVRDEECSELSMVADKTEKAGEYSVTYDGFNTFTIPKTDYDNFLMAHLINEKDGETFQLMGLYGREPDLSSDIKERFAQLCEKHGILRENIIDLSNANRCLQARE.

Positions 1–18 are cleaved as a signal peptide; that stretch reads MKMLLLLCLGLTLVCVHA. A disulfide bridge connects residues C82 and C175.

Belongs to the calycin superfamily. Lipocalin family. In terms of tissue distribution, abundant in the urine of adult male mice but absent from that of females.

The protein localises to the secreted. Functionally, binds pheromones that are released from drying urine of males. These pheromones affect the sexual behavior of females. This is Major urinary protein 1 (Mup1) from Mus musculus (Mouse).